Reading from the N-terminus, the 119-residue chain is Probable prefoldin subunit 6 (119 aa).

This sequence belongs to the prefoldin subunit beta family. As to quaternary structure, heterohexamer of two PFD-alpha type and four PFD-beta type subunits. May interact with MSP1.

Functionally, binds specifically to cytosolic chaperonin (c-CPN) and transfers target proteins to it. Binds to nascent polypeptide chain and promotes folding in an environment in which there are many competing pathways for nonnative proteins. The protein is Probable prefoldin subunit 6 of Plasmodium falciparum (isolate 3D7).